An 842-amino-acid chain; its full sequence is Translation initiation factor IF-2 (842 aa).

Residues 94–259 (QRSPEEIQAE…HGFQNPTGPV (166 aa)) form a disordered region. Over residues 96–138 (SPEEIQAEQKRELDERRAAENAARDKVEAEVRQRNEEQARRQA) the composition is skewed to basic and acidic residues. Residues 139-148 (ADSAVAAPAP) show a composition bias toward low complexity. The span at 149-159 (AAKPEPAPAAA) shows a compositional bias: pro residues. The segment covering 160–172 (PAPVVADAPASED) has biased composition (low complexity). Basic and acidic residues-rich tracts occupy residues 173 to 202 (AAAR…RGEA) and 226 to 235 (TTDEESDGAR). The segment covering 236 to 249 (RGRGGKGKLKKRNQ) has biased composition (basic residues). Positions 342–509 (SRAPVVTVMG…AVLLQAEILE (168 aa)) constitute a tr-type G domain. Residues 351-358 (GHVDHGKT) are G1. 351–358 (GHVDHGKT) provides a ligand contact to GTP. The tract at residues 376–380 (GITQH) is G2. Positions 397–400 (DTPG) are G3. Residues 397–401 (DTPGH) and 451–454 (NKID) each bind GTP. The tract at residues 451–454 (NKID) is G4. Residues 487–489 (SAK) are G5.

Belongs to the TRAFAC class translation factor GTPase superfamily. Classic translation factor GTPase family. IF-2 subfamily.

It localises to the cytoplasm. Its function is as follows. One of the essential components for the initiation of protein synthesis. Protects formylmethionyl-tRNA from spontaneous hydrolysis and promotes its binding to the 30S ribosomal subunits. Also involved in the hydrolysis of GTP during the formation of the 70S ribosomal complex. The protein is Translation initiation factor IF-2 of Pseudomonas putida (strain GB-1).